A 76-amino-acid polypeptide reads, in one-letter code: DNA-directed RNA polymerase subunit epsilon (76 aa).

The protein belongs to the RNA polymerase subunit epsilon family. In terms of assembly, RNAP is composed of a core of 2 alpha, a beta and a beta' subunit. The core is associated with a delta subunit, and at least one of epsilon or omega. When a sigma factor is associated with the core the holoenzyme is formed, which can initiate transcription.

The enzyme catalyses RNA(n) + a ribonucleoside 5'-triphosphate = RNA(n+1) + diphosphate. A non-essential component of RNA polymerase (RNAP). The protein is DNA-directed RNA polymerase subunit epsilon of Lactococcus lactis subsp. cremoris (strain MG1363).